The sequence spans 187 residues: Elongation factor P (187 aa).

The protein belongs to the elongation factor P family.

The protein localises to the cytoplasm. It functions in the pathway protein biosynthesis; polypeptide chain elongation. Functionally, involved in peptide bond synthesis. Stimulates efficient translation and peptide-bond synthesis on native or reconstituted 70S ribosomes in vitro. Probably functions indirectly by altering the affinity of the ribosome for aminoacyl-tRNA, thus increasing their reactivity as acceptors for peptidyl transferase. The polypeptide is Elongation factor P (Roseiflexus castenholzii (strain DSM 13941 / HLO8)).